The primary structure comprises 354 residues: Uroporphyrinogen decarboxylase (354 aa).

Residues 27–31 (RQAGR), Asp77, Tyr154, Ser209, and His327 each bind substrate.

It belongs to the uroporphyrinogen decarboxylase family. As to quaternary structure, homodimer.

It localises to the cytoplasm. The enzyme catalyses uroporphyrinogen III + 4 H(+) = coproporphyrinogen III + 4 CO2. It participates in porphyrin-containing compound metabolism; protoporphyrin-IX biosynthesis; coproporphyrinogen-III from 5-aminolevulinate: step 4/4. Its function is as follows. Catalyzes the decarboxylation of four acetate groups of uroporphyrinogen-III to yield coproporphyrinogen-III. This chain is Uroporphyrinogen decarboxylase, found in Shewanella denitrificans (strain OS217 / ATCC BAA-1090 / DSM 15013).